Here is a 629-residue protein sequence, read N- to C-terminus: Probable potassium transport system protein Kup 3 (629 aa).

Helical transmembrane passes span 20 to 40 (LSLS…LYTF), 61 to 81 (VSLI…SFAL), 106 to 126 (PFII…GTIT), 143 to 163 (PSLK…LFAI), 171 to 191 (IGKA…ILGA), 212 to 232 (FLFS…LCVT), 253 to 273 (WFGL…ALVL), 291 to 311 (FLLP…QAII), 343 to 363 (IYIG…TIGF), 372 to 392 (AYGI…FIAL), 400 to 420 (IITS…FFAA), and 425 to 445 (FING…MMYI).

It belongs to the HAK/KUP transporter (TC 2.A.72) family.

The protein localises to the cell inner membrane. The catalysed reaction is K(+)(in) + H(+)(in) = K(+)(out) + H(+)(out). Its function is as follows. Transport of potassium into the cell. Likely operates as a K(+):H(+) symporter. The protein is Probable potassium transport system protein Kup 3 of Legionella pneumophila (strain Lens).